A 353-amino-acid polypeptide reads, in one-letter code: Photosystem II D2 protein (353 aa).

Thr2 bears the N-acetylthreonine mark. Residue Thr2 is modified to Phosphothreonine. Residues Cys41–Thr61 form a helical membrane-spanning segment. His118 is a chlorophyll a binding site. A helical transmembrane segment spans residues Gly125 to Pro141. Residues Gln130 and Asn143 each contribute to the pheophytin a site. Residues Val153–Ser166 traverse the membrane as a helical segment. His198 provides a ligand contact to chlorophyll a. A helical transmembrane segment spans residues Ala208–Asp228. A plastoquinone contacts are provided by His215 and Phe262. Residue His215 coordinates Fe cation. Residue His269 coordinates Fe cation. A helical membrane pass occupies residues Gly279–Arg295.

It belongs to the reaction center PufL/M/PsbA/D family. In terms of assembly, PSII is composed of 1 copy each of membrane proteins PsbA, PsbB, PsbC, PsbD, PsbE, PsbF, PsbH, PsbI, PsbJ, PsbK, PsbL, PsbM, PsbT, PsbX, PsbY, PsbZ, Psb30/Ycf12, at least 3 peripheral proteins of the oxygen-evolving complex and a large number of cofactors. It forms dimeric complexes. The D1/D2 heterodimer binds P680, chlorophylls that are the primary electron donor of PSII, and subsequent electron acceptors. It shares a non-heme iron and each subunit binds pheophytin, quinone, additional chlorophylls, carotenoids and lipids. There is also a Cl(-1) ion associated with D1 and D2, which is required for oxygen evolution. The PSII complex binds additional chlorophylls, carotenoids and specific lipids. is required as a cofactor.

The protein localises to the plastid. Its subcellular location is the chloroplast thylakoid membrane. The enzyme catalyses 2 a plastoquinone + 4 hnu + 2 H2O = 2 a plastoquinol + O2. In terms of biological role, photosystem II (PSII) is a light-driven water:plastoquinone oxidoreductase that uses light energy to abstract electrons from H(2)O, generating O(2) and a proton gradient subsequently used for ATP formation. It consists of a core antenna complex that captures photons, and an electron transfer chain that converts photonic excitation into a charge separation. The D1/D2 (PsbA/PsbD) reaction center heterodimer binds P680, the primary electron donor of PSII as well as several subsequent electron acceptors. D2 is needed for assembly of a stable PSII complex. This Lemna minor (Common duckweed) protein is Photosystem II D2 protein.